The chain runs to 138 residues: Molluscan insulin-related peptide 5 (138 aa).

An N-terminal signal peptide occupies residues 1–31; it reads MAGVRLVFTKAFMVTVLLTLLLNIGVKPAEG. The residue at position 32 (Gln32) is a Pyrrolidone carboxylic acid. 3 disulfide bridges follow: Cys48-Cys124, Cys60-Cys137, and Cys123-Cys128. A propeptide spans 72–84 (C-beta peptide like); sequence DAETGWLLPETMV. Positions 87–111 are cleaved as a propeptide — C-alpha peptide like; sequence NAQTDLDDPLRNIKLSSESALTYLT. At Gln114 the chain carries Pyrrolidone carboxylic acid.

The protein belongs to the insulin family. As to quaternary structure, heterodimer of a B chain and an A chain linked by two disulfide bonds. In terms of tissue distribution, expressed in the cerebral light-green cells which are giant neuroendocrines cells involved in the control of growth.

Its subcellular location is the cytoplasmic vesicle. It localises to the secretory vesicle. This Lymnaea stagnalis (Great pond snail) protein is Molluscan insulin-related peptide 5.